Consider the following 137-residue polypeptide: Histone H2B.3 (137 aa).

Residues 1–37 show a composition bias toward basic and acidic residues; it reads KPAEKKPAEKTPVAEKAPAEKKPKAGKKLPKDAAAGD. Residues 1–45 are disordered; sequence KPAEKKPAEKTPVAEKAPAEKKPKAGKKLPKDAAAGDKKKKRSKK. N6-acetyllysine occurs at positions 27 and 28. Lys-133 participates in a covalent cross-link: Glycyl lysine isopeptide (Lys-Gly) (interchain with G-Cter in ubiquitin).

This sequence belongs to the histone H2B family. The nucleosome is a histone octamer containing two molecules each of H2A, H2B, H3 and H4 assembled in one H3-H4 heterotetramer and two H2A-H2B heterodimers. The octamer wraps approximately 147 bp of DNA. In terms of processing, can be acetylated to formH2BK33ac and H2BK34ac. Post-translationally, monoubiquitinated to form H2BK143ub1; may give a specific tag for epigenetic transcriptional activation. In terms of tissue distribution, ubiquitous. Highest level in shoots, fruits and young flower buds, including petals, anthers and ovules.

The protein resides in the nucleus. It is found in the chromosome. In terms of biological role, core component of nucleosome. Nucleosomes wrap and compact DNA into chromatin, limiting DNA accessibility to the cellular machineries which require DNA as a template. Histones thereby play a central role in transcription regulation, DNA repair, DNA replication and chromosomal stability. DNA accessibility is regulated via a complex set of post-translational modifications of histones, also called histone code, and nucleosome remodeling. This Solanum lycopersicum (Tomato) protein is Histone H2B.3 (H2B-3).